Reading from the N-terminus, the 591-residue chain is MVMDQLALHRYWAVANQKMVGKILSEFAYEQAFQFEPTAQGYQLNLENGTRYCFAGEENIWGQVMIDPTSITRHAEIEADEPISAALLMRDLQPLLKMPDDAFAEHLEDLNATLLGDCKLMQRNEAITARDLAMLPCEQQQTYFDGHPKFVFNKGRRGWGSDDLKRYAPEAERVSNWVGSRFITRFCSSPPTMKSHGKPCCKAPSRPMKSSRWTVCWLPISLDSTIIVMFRFILWQWSNKLALLFVREIATKQLVYLGEFGDHFLPQLSLRTLSNVTRPAGYDIKLPLTVMNTSCYRGIPGRYILAGPTASDWIDQVFKSDPLLIAKQAEVLQEPAAAFAAQADYALLPNAPYRYHELLGVIWRESAASKLKAGERAILMAALMESDNQGQPLIAEYVQASGLTLEAWLSKLFDAVVIPYYHLLCNYGVSLIAHGQNVTLVLENHAPKRILLKDFQGDMRLVSREYPEQASLDDSVKKVTVRLPEHLIIHDLQTGHFVTTLRFISPLVAKLGFSEPQFYRLLGDRLKAYMAAHREYQPRFEQFDLFKPRILRIGLNLAKFRHSTDASASRMLPDMDDMLNNPLTKALEHQG.

It belongs to the IucA/IucC family.

The catalysed reaction is N(2)-citryl-N(6)-acetyl-N(6)-hydroxy-L-lysine + N(6)-acetyl-N(6)-hydroxy-L-lysine + ATP = aerobactin + AMP + diphosphate + H(+). Its pathway is siderophore biosynthesis; aerobactin biosynthesis. Functionally, catalyzes the attachment of the second N-acetyl-N-hydroxylysine to the carboxylic group of N-citryl-N-acetyl-N-hydroxylysine to yield aerobactin. Involved in the biosynthesis of the siderophore aerobactin which is a chelator that mediates the high-affinity iron transport systems induced under iron-stressed conditions. In Vibrio mimicus, this protein is Aerobactin synthase (iucC).